We begin with the raw amino-acid sequence, 364 residues long: tRNA-specific 2-thiouridylase MnmA 1 (364 aa).

Residues 10–17 and Met-36 each bind ATP; that span reads GMSGGVDS. The active-site Nucleophile is Cys-106. A disulfide bond links Cys-106 and Cys-204. Gly-130 contributes to the ATP binding site. An interaction with tRNA region spans residues 154-156; the sequence is KDQ. Cys-204 serves as the catalytic Cysteine persulfide intermediate. The segment at 310 to 311 is interaction with tRNA; sequence RY.

The protein belongs to the MnmA/TRMU family.

Its subcellular location is the cytoplasm. The enzyme catalyses S-sulfanyl-L-cysteinyl-[protein] + uridine(34) in tRNA + AH2 + ATP = 2-thiouridine(34) in tRNA + L-cysteinyl-[protein] + A + AMP + diphosphate + H(+). Catalyzes the 2-thiolation of uridine at the wobble position (U34) of tRNA, leading to the formation of s(2)U34. In Thermoanaerobacter pseudethanolicus (strain ATCC 33223 / 39E) (Clostridium thermohydrosulfuricum), this protein is tRNA-specific 2-thiouridylase MnmA 1.